The following is a 160-amino-acid chain: Eukaryotic translation initiation factor 5A (160 aa).

Positions 1–13 (MSDSEEHHFESKA) are enriched in basic and acidic residues. Positions 1 to 22 (MSDSEEHHFESKADAGASKTYP) are disordered. Lys-53 bears the Hypusine mark.

The protein belongs to the eIF-5A family. In terms of processing, lys-53 undergoes hypusination, a unique post-translational modification that consists in the addition of a butylamino group from spermidine to lysine side chain, leading to the formation of the unusual amino acid hypusine. eIF-5As are the only known proteins to undergo this modification, which is essential for their function.

Its function is as follows. Translation factor that promotes translation elongation and termination, particularly upon ribosome stalling at specific amino acid sequence contexts. Binds between the exit (E) and peptidyl (P) site of the ribosome and promotes rescue of stalled ribosome: specifically required for efficient translation of polyproline-containing peptides as well as other motifs that stall the ribosome. Acts as a ribosome quality control (RQC) cofactor by joining the RQC complex to facilitate peptidyl transfer during CAT tailing step. The protein is Eukaryotic translation initiation factor 5A (TIF5A) of Zea mays (Maize).